The sequence spans 317 residues: Methionyl-tRNA formyltransferase (317 aa).

112 to 115 contacts (6S)-5,6,7,8-tetrahydrofolate; the sequence is SLLP.

Belongs to the Fmt family.

The enzyme catalyses L-methionyl-tRNA(fMet) + (6R)-10-formyltetrahydrofolate = N-formyl-L-methionyl-tRNA(fMet) + (6S)-5,6,7,8-tetrahydrofolate + H(+). In terms of biological role, attaches a formyl group to the free amino group of methionyl-tRNA(fMet). The formyl group appears to play a dual role in the initiator identity of N-formylmethionyl-tRNA by promoting its recognition by IF2 and preventing the misappropriation of this tRNA by the elongation apparatus. The polypeptide is Methionyl-tRNA formyltransferase (Histophilus somni (strain 129Pt) (Haemophilus somnus)).